We begin with the raw amino-acid sequence, 861 residues long: Translation initiation factor IF-2 (861 aa).

The interval 107-272 (AQKQQDIQRA…QRKKKSKVVQ (166 aa)) is disordered. A compositionally biased stretch (basic and acidic residues) spans 115–128 (RAAEEAAAKERETE). 2 stretches are compositionally biased toward polar residues: residues 148 to 158 (SVQQEAANMDT) and 169 to 180 (VDESVSATTAGG). Residues 210-228 (NKEDSEVRREPADAEDLKR) are compositionally biased toward basic and acidic residues. Over residues 260–269 (RARQRKKKSK) the composition is skewed to basic residues. The tr-type G domain maps to 362–531 (SRAPVVSVMG…LLQSEMLELT (170 aa)). Positions 371–378 (GHVDHGKT) are G1. GTP is bound at residue 371–378 (GHVDHGKT). Residues 396 to 400 (GITQH) form a G2 region. Residues 417–420 (DTPG) are G3. GTP-binding positions include 417 to 421 (DTPGH) and 471 to 474 (NKMD). Residues 471–474 (NKMD) are G4. The G5 stretch occupies residues 507–509 (SAH).

The protein belongs to the TRAFAC class translation factor GTPase superfamily. Classic translation factor GTPase family. IF-2 subfamily.

The protein resides in the cytoplasm. Functionally, one of the essential components for the initiation of protein synthesis. Protects formylmethionyl-tRNA from spontaneous hydrolysis and promotes its binding to the 30S ribosomal subunits. Also involved in the hydrolysis of GTP during the formation of the 70S ribosomal complex. The polypeptide is Translation initiation factor IF-2 (Hahella chejuensis (strain KCTC 2396)).